The following is a 123-amino-acid chain: UPF0295 protein Bcer98_0460 (123 aa).

A run of 2 helical transmembrane segments spans residues 12-32 (IRTFALSLVFIGLLIAYLGVF) and 43-63 (FMMLGFLAVLASTFVYFWIGM).

It belongs to the UPF0295 family.

It is found in the cell membrane. This is UPF0295 protein Bcer98_0460 from Bacillus cytotoxicus (strain DSM 22905 / CIP 110041 / 391-98 / NVH 391-98).